Reading from the N-terminus, the 172-residue chain is LOB domain-containing protein 4 (172 aa).

An LOB domain is found at 12–113 (SPCAACKLLR…AQLALAQAEV (102 aa)). A disordered region spans residues 125 to 152 (PGHGLCPDSPSSSGSPSSKQVSPQDNKG). The segment covering 131 to 147 (PDSPSSSGSPSSKQVSP) has biased composition (low complexity).

This sequence belongs to the LOB domain-containing protein family. Expressed in young shoots, roots, stems, leaves and flowers.

This chain is LOB domain-containing protein 4 (LBD4), found in Arabidopsis thaliana (Mouse-ear cress).